We begin with the raw amino-acid sequence, 279 residues long: Phage-like element PBSX protein XepA (279 aa).

It to B.subtilis YqxG/YqdC.

Its function is as follows. Not known; does not seem to be involved in host cell lysis. This Bacillus subtilis (strain 168) protein is Phage-like element PBSX protein XepA (xepA).